Here is a 776-residue protein sequence, read N- to C-terminus: Chitin synthase 1 (776 aa).

The next 6 membrane-spanning stretches (helical) occupy residues 451–471, 487–507, 523–543, 558–578, 695–714, and 723–743; these read LVSLLFSFFSLSNFYLTFYFL, FWIFTLFNYLCIGVLTSLFIV, LIILLTICALYALVVGFVFVI, VLVSIVVSLLSTYGLYTLMSI, VVLFWMIANLVFIMTMVQVY, and IYLAFILWAVAVLALVRAIGS.

The protein belongs to the chitin synthase family.

It localises to the cell membrane. It carries out the reaction [(1-&gt;4)-N-acetyl-beta-D-glucosaminyl](n) + UDP-N-acetyl-alpha-D-glucosamine = [(1-&gt;4)-N-acetyl-beta-D-glucosaminyl](n+1) + UDP + H(+). Its activity is regulated as follows. Requires proteolytic activation. Polymerizes chitin, a structural polymer of the cell wall and septum, by transferring the sugar moiety of UDP-GlcNAc to the non-reducing end of the growing chitin polymer. Also involved in forming cross walls in the hyphal phase. The chain is Chitin synthase 1 (CHS1) from Candida albicans (Yeast).